The primary structure comprises 343 residues: Polyprenyl transferase spyF (343 aa).

8 helical membrane passes run 38–58, 62–82, 92–112, 138–158, 170–190, 241–261, 273–293, and 311–331; these read WLAV…SHPL, VSVW…PASI, LLCL…NDWI, GFIW…STIL, LYIY…AIGW, AYVA…GLVL, SGWL…HQLL, and FALG…SSGM.

This sequence belongs to the UbiA prenyltransferase family. Mg(2+) serves as cofactor.

It is found in the membrane. The catalysed reaction is triacetate lactone + (2E,6E,10E)-geranylgeranyl diphosphate = (2E,6E,10E)-geranylgeranyl-triacetate lactone + diphosphate. It participates in secondary metabolite biosynthesis; terpenoid biosynthesis. Functionally, polyprenyl transferase; part of the gene cluster that mediates the biosynthesis of meroterpenoids called sartorypyrones. Within the pathway, spyF catalyzes the prenylation of triacetic acid lactone (TAL) to produce geranylgeranyl-triacetate lactone. The biosynthesis of sartorypyrones begins with the production of triacetic acid lactone (TAL) by the NR-PKS spyA using one molecule of acetyl-CoA and two molecules of malonyl-CoA. The prenyltransferase spyF then conjugates geranylgeranyl pyrophosphate (GGPP) to TAL to form geranylgeranyl-triacetate lactone, for which the pathway-specific geranylgeranyl pyrophosphate synthase (GGPS) spyE is required to provide GGPP. Subsequently, geranylgeranyl-triacetate lactone is epoxidized at the terminal olein by the FAD-dependent monooxygenase spyC, followed by cyclization of the terpenoid component catalyzed by the terpene cyclase spyD to produce both the bicyclic sartorypyrone F and the monocyclic sartorypyrone D. Finally, the last step of the biosynthesis involves the acetylation of the meroterpenoids sartorypyrones D and F by the acetyltransferase SpyB to produce sartorypyrones A and G, respectively. This chain is Polyprenyl transferase spyF, found in Aspergillus fumigatus (strain ATCC MYA-4609 / CBS 101355 / FGSC A1100 / Af293) (Neosartorya fumigata).